A 511-amino-acid polypeptide reads, in one-letter code: Maturase K (511 aa).

This sequence belongs to the intron maturase 2 family. MatK subfamily.

Its subcellular location is the plastid. It localises to the chloroplast. Its function is as follows. Usually encoded in the trnK tRNA gene intron. Probably assists in splicing its own and other chloroplast group II introns. The sequence is that of Maturase K from Bowiea volubilis (Climbing onion).